Consider the following 75-residue polypeptide: Endogenous retrovirus group K member 5 Np9 protein (75 aa).

A disordered region spans residues 22–43 (TAPKRQRPSRTGHDDDGGFVEK). Positions 32–43 (TGHDDDGGFVEK) are enriched in basic and acidic residues.

The protein localises to the nucleus. May possess a function in tumorigenesis. This is Endogenous retrovirus group K member 5 Np9 protein (ERVK-5) from Homo sapiens (Human).